The primary structure comprises 446 residues: Phosphoglucosamine mutase (446 aa).

Catalysis depends on serine 100, which acts as the Phosphoserine intermediate. Mg(2+) is bound by residues serine 100, aspartate 241, aspartate 243, and aspartate 245. Residue serine 100 is modified to Phosphoserine.

Belongs to the phosphohexose mutase family. It depends on Mg(2+) as a cofactor. Post-translationally, activated by phosphorylation.

It carries out the reaction alpha-D-glucosamine 1-phosphate = D-glucosamine 6-phosphate. Functionally, catalyzes the conversion of glucosamine-6-phosphate to glucosamine-1-phosphate. This is Phosphoglucosamine mutase from Methylobacterium nodulans (strain LMG 21967 / CNCM I-2342 / ORS 2060).